Consider the following 697-residue polypeptide: U-box domain-containing protein 18 (697 aa).

The interval 23-210 (SISIVTLLDS…INRILDHVGI (188 aa)) is U-box N-terminal domain (UND) required for EXO70B1 binding and crucial for the negative regulation of ABA-dependent stomatal movement. The region spanning 287–361 (LKVEDLLCPI…RKHCKTNGIV (75 aa)) is the U-box domain. ARM repeat units lie at residues 420 to 459 (SFNR…NLSK), 461 to 500 (VTGK…YLSS), 502 to 544 (EDYS…GLLM), 546 to 587 (SDNH…KLAE), 589 to 631 (PDGT…NLCL), and 657 to 696 (NGEY…FVHA).

Interacts with EXO70B1 via its U-box N-terminal domain (UND).

It is found in the endomembrane system. The enzyme catalyses S-ubiquitinyl-[E2 ubiquitin-conjugating enzyme]-L-cysteine + [acceptor protein]-L-lysine = [E2 ubiquitin-conjugating enzyme]-L-cysteine + N(6)-ubiquitinyl-[acceptor protein]-L-lysine.. It functions in the pathway protein modification; protein ubiquitination. Its function is as follows. Functions as an E3 ubiquitin ligase. Mediates EXO70B1 ubiquitination. Involved in the regulation of abscisic acid (ABA)-mediated stomatal movements. This is U-box domain-containing protein 18 from Arabidopsis thaliana (Mouse-ear cress).